A 547-amino-acid polypeptide reads, in one-letter code: Alpha-1,3-mannosyl-glycoprotein 4-beta-N-acetylglucosaminyltransferase B (547 aa).

Residues 1 to 7 are Cytoplasmic-facing; it reads MRLRNGT. A helical; Signal-anchor for type II membrane protein membrane pass occupies residues 8-28; the sequence is FLTVLLFGLCGLISLSWYTAF. Topologically, residues 29–547 are lumenal; the sequence is SNSKGNVVDI…LSEIFIKKAE (519 aa). Residues 36–83 are a coiled coil; the sequence is VDIYQREFLALRDRLHSAEQENLKRSKELNLVLDEIKRAIAEKQALRD. 3 N-linked (GlcNAc...) asparagine glycosylation sites follow: Asn-85, Asn-101, and Asn-464.

It belongs to the glycosyltransferase 54 family. A divalent metal cation serves as cofactor. N-glycosylated.

It is found in the golgi apparatus membrane. It catalyses the reaction N(4)-{beta-D-GlcNAc-(1-&gt;2)-alpha-D-Man-(1-&gt;3)-[beta-D-GlcNAc-(1-&gt;2)-alpha-D-Man-(1-&gt;6)]-beta-D-Man-(1-&gt;4)-beta-D-GlcNAc-(1-&gt;4)-beta-D-GlcNAc}-L-asparaginyl-[protein] + UDP-N-acetyl-alpha-D-glucosamine = N(4)-{beta-D-GlcNAc-(1-&gt;2)-[beta-D-GlcNAc-(1-&gt;4)]-alpha-D-Man-(1-&gt;3)-[beta-D-GlcNAc-(1-&gt;2)-alpha-D-Man-(1-&gt;6)]-beta-D-Man-(1-&gt;4)-beta-D-GlcNAc-(1-&gt;4)-beta-D-GlcNAc}-L-asparaginyl-[protein] + UDP + H(+). The enzyme catalyses an N(4)-{beta-D-GlcNAc-(1-&gt;2)-alpha-D-Man-(1-&gt;3)-[alpha-D-Man-(1-&gt;6)]-beta-D-Man-(1-&gt;4)-beta-D-GlcNAc-(1-&gt;4)-beta-D-GlcNAc}-L-asparaginyl-[protein] + UDP-N-acetyl-alpha-D-glucosamine = an N(4)-{beta-D-GlcNAc-(1-&gt;2)-[beta-D-GlcNAc-(1-&gt;4)]-alpha-D-Man-(1-&gt;3)-[alpha-D-Man-(1-&gt;6)]-beta-D-Man-(1-&gt;4)-beta-D-GlcNAc-(1-&gt;4)-beta-D-GlcNAc}-L-asparaginyl-[protein] + UDP + H(+). The catalysed reaction is an N(4)-{beta-D-GlcNAc-(1-&gt;2)-alpha-D-Man-(1-&gt;3)-[beta-D-GlcNAc-(1-&gt;2)-[beta-D-GlcNAc-(1-&gt;6)]-alpha-D-Man-(1-&gt;6)]-beta-D-Man-(1-&gt;4)-beta-D-GlcNAc-(1-&gt;4)-beta-D-GlcNAc}-L-asparaginyl-[protein] + UDP-N-acetyl-alpha-D-glucosamine = an N(4)-{beta-D-GlcNAc-(1-&gt;2)-[beta-D-GlcNAc-(1-&gt;4)]-alpha-D-Man-(1-&gt;3)-[beta-D-GlcNAc-(1-&gt;2)-[beta-D-GlcNAc-(1-&gt;6)]-alpha-D-Man-(1-&gt;6)]-beta-D-Man-(1-&gt;4)-beta-D-GlcNAc-(1-&gt;4)-beta-D-GlcNAc}-L-asparaginyl-[protein] + UDP + H(+). It carries out the reaction an N(4)-{beta-D-GlcNAc-(1-&gt;2)-alpha-D-Man-(1-&gt;3)-[beta-D-GlcNAc-(1-&gt;2)-alpha-D-Man-(1-&gt;6)]-beta-D-Man-(1-&gt;4)-beta-D-GlcNAc-(1-&gt;4)-[alpha-L-Fuc-(1-&gt;6)]-beta-D-GlcNAc}-L-asparaginyl-[protein] + UDP-N-acetyl-alpha-D-glucosamine = N(4)-{beta-D-GlcNAc-(1-&gt;2)-[beta-D-GlcNAc-(1-&gt;4)]-alpha-D-Man-(1-&gt;3)-[beta-D-GlcNAc-(1-&gt;2)-alpha-D-Man-(1-&gt;6)]-beta-D-Man-(1-&gt;4)-beta-D-GlcNAc-(1-&gt;4)-[alpha-L-Fuc-(1-&gt;6)]-beta-D-GlcNAc}-asparaginyl-[protein] + UDP + H(+). It catalyses the reaction an N(4)-{beta-D-GlcNAc-(1-&gt;2)-alpha-D-Man-(1-&gt;3)-[beta-D-Gal-(1-&gt;4)-beta-D-GlcNAc-(1-&gt;2)-alpha-D-Man-(1-&gt;6)]-beta-D-Man-(1-&gt;4)-beta-D-GlcNAc-(1-&gt;4)-beta-D-GlcNAc}-L-asparaginyl-[protein] + UDP-N-acetyl-alpha-D-glucosamine = an N(4)-{beta-D-GlcNAc-(1-&gt;2)-[beta-D-GlcNAc-(1-&gt;4)]-alpha-D-Man-(1-&gt;3)-[beta-D-Gal-(1-&gt;4)-beta-D-GlcNAc-(1-&gt;2)-alpha-D-Man-(1-&gt;6)]-beta-D-Man-(1-&gt;4)-beta-D-GlcNAc-(1-&gt;4)-beta-D-GlcNAc}-L-asparaginyl-[protein] + UDP + H(+). The enzyme catalyses N(4)-{beta-D-GlcNAc-(1-&gt;2)-alpha-D-Man-(1-&gt;3)-[alpha-D-Man-(1-&gt;3)-{alpha-D-Man-(1-&gt;6)}-alpha-D-Man-(1-&gt;6)]-beta-D-Man-(1-&gt;4)-beta-D-GlcNAc-(1-&gt;4)-beta-D-GlcNAc}-asparaginyl-[protein] + UDP-N-acetyl-alpha-D-glucosamine = N(4)-{beta-D-GlcNAc-(1-&gt;2)-[beta-D-GlcNAc-(1-&gt;4)]-alpha-D-Man-(1-&gt;3)-[alpha-D-Man-(1-&gt;3)-{alpha-D-Man-(1-&gt;6)}-alpha-D-Man-(1-&gt;6)]-beta-D-Man-(1-&gt;4)-beta-D-GlcNAc-(1-&gt;4)-beta-D-GlcNAc}-asparaginyl-[protein] + UDP + H(+). The catalysed reaction is N(4)-{beta-D-GlcNAc-(1-&gt;2)-alpha-D-Man-(1-&gt;3)-beta-D-Man-(1-&gt;4)-beta-D-GlcNAc-(1-&gt;4)-beta-D-GlcNAc}-asparaginyl-[protein] + UDP-N-acetyl-alpha-D-glucosamine = N(4)-{beta-D-GlcNAc-(1-&gt;2)-[beta-D-GlcNAc-(1-&gt;4)]-alpha-D-Man-(1-&gt;3)-beta-D-Man-(1-&gt;4)-beta-D-GlcNAc-(1-&gt;4)-beta-D-GlcNAc}-asparaginyl-[protein] + UDP + H(+). Its pathway is protein modification; protein glycosylation. Its function is as follows. Glycosyltransferase that catalyze the transfer of GlcNAc from UDP-GlcNAc to the GlcNAcbeta1-2Manalpha1-3 arm of the core structure of N-linked glycans through a beta1-4 linkage and participates in the production of tri- and tetra-antennary N-linked sugar chains. Prefers complex-type N-glycans over hybrid-types. Has lower affinities for donors or acceptors than MGAT4A, suggesting that, under physiological conditions, it is not the main contributor in N-glycan biosynthesis. The chain is Alpha-1,3-mannosyl-glycoprotein 4-beta-N-acetylglucosaminyltransferase B (mgat4bQ9UQ53) from Danio rerio (Zebrafish).